We begin with the raw amino-acid sequence, 458 residues long: MVQISEVKGNKRDNRTAAHTHIKGLGLKSDGYAEKQAAGFVGQAAARESCGVVVDLIRAQKMAGRGVLLAGGPGTGKTALALAISQELGTKIPFCPIVGSEIYSAEVKKTEMLMENFRRAIGLKVRETKEVYEGEVTELTPEEAENPLGGYGKTISTLLIGLKSAKGQKKLRLDPSIYEAIQKERVTVGDVIYIEANTGACKRVGRSDAYATEFDLEAEEYVPIPKGEVHKKKEIVQDVSLHDLDVANSRPQGGQDIMSMMGQLMKPKMTEITDKLRGEINKVVSKYIDQGVAELVPGVLFIDEAHMLDVECFTYLNRALESPIAPIVVLASNRGMCTIRGTDDIVAAHGIPSDFLARMLIIPTTPYEADEIKRIVRIRSTTEGVSVSDAAIDKISEHGVRISLRYCLQLLTPASILAKANGRSQIDVQDVAECEDLFLDASRSAALLSSEAGRGYLA.

71-78 (GGPGTGKT) provides a ligand contact to ATP.

It belongs to the RuvB family. In terms of assembly, may form heterododecamers with RVB2. Component of the SWR1 chromatin remodeling complex, the INO80 chromatin remodeling complex, and of the R2TP complex.

The protein localises to the nucleus. The catalysed reaction is ATP + H2O = ADP + phosphate + H(+). In terms of biological role, DNA helicase which participates in several chromatin remodeling complexes, including the SWR1 and the INO80 complexes. The SWR1 complex mediates the ATP-dependent exchange of histone H2A for the H2A variant HZT1 leading to transcriptional regulation of selected genes by chromatin remodeling. The INO80 complex remodels chromatin by shifting nucleosomes and is involved in DNA repair. Also involved in pre-rRNA processing. This chain is RuvB-like helicase 1 (RVB1), found in Gibberella zeae (strain ATCC MYA-4620 / CBS 123657 / FGSC 9075 / NRRL 31084 / PH-1) (Wheat head blight fungus).